The following is a 227-amino-acid chain: Sensory transduction protein RegX3 (227 aa).

One can recognise a Response regulatory domain in the interval serine 3–leucine 116. At aspartate 52 the chain carries 4-aspartylphosphate. The ompR/PhoB-type DNA-binding region spans aspartate 128 to glycine 227.

Phosphorylated by SenX3.

Functionally, member of the two-component regulatory system SenX3/RegX3. Specifically binds to the promoter region of the senX3-regX3 operon. The sequence is that of Sensory transduction protein RegX3 from Mycobacterium bovis (strain ATCC BAA-935 / AF2122/97).